Consider the following 188-residue polypeptide: dCTP deaminase (188 aa).

DCTP is bound by residues 111 to 116 (KSTYAR), 135 to 137 (TLE), Q156, Y170, and Q180. The Proton donor/acceptor role is filled by E137.

The protein belongs to the dCTP deaminase family. In terms of assembly, homotrimer.

The catalysed reaction is dCTP + H2O + H(+) = dUTP + NH4(+). The protein operates within pyrimidine metabolism; dUMP biosynthesis; dUMP from dCTP (dUTP route): step 1/2. Its function is as follows. Catalyzes the deamination of dCTP to dUTP. In Thioalkalivibrio sulfidiphilus (strain HL-EbGR7), this protein is dCTP deaminase.